Consider the following 447-residue polypeptide: N-succinylarginine dihydrolase (447 aa).

Substrate-binding positions include 19–28, asparagine 110, and 137–138; these read AGLSFGNEAS and HR. Glutamate 174 is an active-site residue. Arginine 212 is a substrate binding site. Residue histidine 248 is part of the active site. Positions 250 and 359 each coordinate substrate. Cysteine 365 functions as the Nucleophile in the catalytic mechanism.

Belongs to the succinylarginine dihydrolase family. Homodimer.

It catalyses the reaction N(2)-succinyl-L-arginine + 2 H2O + 2 H(+) = N(2)-succinyl-L-ornithine + 2 NH4(+) + CO2. The protein operates within amino-acid degradation; L-arginine degradation via AST pathway; L-glutamate and succinate from L-arginine: step 2/5. In terms of biological role, catalyzes the hydrolysis of N(2)-succinylarginine into N(2)-succinylornithine, ammonia and CO(2). The polypeptide is N-succinylarginine dihydrolase (Salmonella heidelberg (strain SL476)).